Reading from the N-terminus, the 351-residue chain is MASSLLLALLFLTLATVVNLKTDGPCPACWGATFDLESHRELLLDLAKKSILDKLHLSQRPILSRPVSREALKTALRRLRGTRAETLLEHDQRQEYEIISFADTGLSNINQTRLEFHFSDRTTGGVEVLQTRFMFFMQLPPNTTQTMNIRVLVLRPYDTNLTLTSQYMLQVDASGWYQLLLGPEAQAACSQGHLTLELVPESQLAHSSLILDGVSHRPFVAAQVRVEGKHRVRRRGINCQGLSRMCCRQEFFVDFREIGWHDWIIQPEGYAMNFCTGQCPLHVAGMPGISASFHTAVLNLLKANTDAGTARRGSCCVPTSRRPLSLLYYDRDSNIVKTDIPDMVVEACGCS.

A signal peptide spans 1 to 18; it reads MASSLLLALLFLTLATVV. The propeptide occupies 19–236; that stretch reads NLKTDGPCPA…EGKHRVRRRG (218 aa). 3 N-linked (GlcNAc...) asparagine glycosylation sites follow: asparagine 110, asparagine 142, and asparagine 160. Disulfide bonds link cysteine 239–cysteine 247, cysteine 246–cysteine 316, cysteine 275–cysteine 348, and cysteine 279–cysteine 350.

It belongs to the TGF-beta family. As to quaternary structure, homodimeric or heterodimeric through association with alpha and beta subunits, linked by one or more disulfide bonds. Inhibins are heterodimers of one alpha and one beta subunit. Activins are homo- or heterodimers of beta subunits only.

It localises to the secreted. Functionally, inhibins and activins inhibit and activate, respectively, the secretion of follitropin by the pituitary gland. Inhibins/activins are involved in regulating a number of diverse functions such as hypothalamic and pituitary hormone secretion, gonadal hormone secretion, germ cell development and maturation, erythroid differentiation, insulin secretion, nerve cell survival, embryonic axial development or bone growth, depending on their subunit composition. Inhibins appear to oppose the functions of activins. In Rattus norvegicus (Rat), this protein is Inhibin beta C chain (Inhbc).